A 975-amino-acid polypeptide reads, in one-letter code: Protein bicaudal D homolog 1 (975 aa).

2 coiled-coil regions span residues 1–265 (MAAE…HISI) and 319–496 (SELN…IANE). Disordered stretches follow at residues 383–403 (SSKE…GEEA), 545–616 (RSGS…LDTS), 800–824 (DHEQ…VSGE), 836–877 (LLHS…ASYL), and 922–975 (DCQQ…PPHP). Basic and acidic residues-rich tracts occupy residues 385-403 (KELK…GEEA) and 581-590 (VAKESTEASK). The segment covering 592 to 602 (PSPTKTPTISP) has biased composition (polar residues). Residues 663-803 (IDKDKEALME…LEDLEFDHEQ (141 aa)) adopt a coiled-coil conformation. Residues 663–803 (IDKDKEALME…LEDLEFDHEQ (141 aa)) are interaction with RAB6A. A compositionally biased stretch (polar residues) spans 840–877 (QGPQTPNIRVSSGTQRKRQFSPSLCDQSRPRTSGASYL).

The protein belongs to the BicD family. In terms of assembly, interacts with RAB6A. Interacts (via C-terminus) with RAB6B (GTP-bound); the interaction is direct. Interacts with CLIP-115 and KIFC2. As to quaternary structure, (Microbial infection) Interacts with human cytomegalovirus/HHV-5 protein UL32. Expressed in the brain, heart and skeletal muscle.

Its subcellular location is the golgi apparatus. Its function is as follows. Regulates coat complex coatomer protein I (COPI)-independent Golgi-endoplasmic reticulum transport by recruiting the dynein-dynactin motor complex. The protein is Protein bicaudal D homolog 1 (BICD1) of Homo sapiens (Human).